The chain runs to 158 residues: Ribonuclease H (158 aa).

The region spanning 2–143 (PEKIIELFTD…VDALLNRVMD (142 aa)) is the RNase H type-1 domain. Positions 11, 49, 71, and 135 each coordinate Mg(2+).

The protein belongs to the RNase H family. As to quaternary structure, monomer. The cofactor is Mg(2+).

Its subcellular location is the cytoplasm. The catalysed reaction is Endonucleolytic cleavage to 5'-phosphomonoester.. Functionally, endonuclease that specifically degrades the RNA of RNA-DNA hybrids. This is Ribonuclease H from Acidithiobacillus ferrooxidans (strain ATCC 23270 / DSM 14882 / CIP 104768 / NCIMB 8455) (Ferrobacillus ferrooxidans (strain ATCC 23270)).